Consider the following 724-residue polypeptide: Catalase-peroxidase (724 aa).

A cross-link (tryptophyl-tyrosyl-methioninium (Trp-Tyr) (with M-252)) is located at residues 98 to 226; the sequence is WHSAGTYRIA…LAAVMMGLIY (129 aa). Histidine 99 serves as the catalytic Proton acceptor. Positions 226 to 252 form a cross-link, tryptophyl-tyrosyl-methioninium (Tyr-Met) (with W-98); sequence YVNPEGVDGNPDPLKTAQDMRVTFARM. Histidine 267 contributes to the heme b binding site.

Belongs to the peroxidase family. Peroxidase/catalase subfamily. As to quaternary structure, homodimer or homotetramer. The cofactor is heme b. In terms of processing, formation of the three residue Trp-Tyr-Met cross-link is important for the catalase, but not the peroxidase activity of the enzyme.

The enzyme catalyses H2O2 + AH2 = A + 2 H2O. The catalysed reaction is 2 H2O2 = O2 + 2 H2O. Bifunctional enzyme with both catalase and broad-spectrum peroxidase activity. This Vibrio cholerae serotype O1 (strain ATCC 39315 / El Tor Inaba N16961) protein is Catalase-peroxidase.